A 473-amino-acid chain; its full sequence is Arginine biosynthesis bifunctional protein ArgJ, mitochondrial (473 aa).

Substrate-binding residues include Thr-201, Lys-230, Thr-241, Glu-328, Asn-468, and Thr-473. Catalysis depends on Thr-241, which acts as the Nucleophile.

Belongs to the ArgJ family. Heterodimer of an alpha and a beta chain. Post-translationally, the alpha and beta chains are autoproteolytically processed from a single precursor protein within the mitochondrion.

It is found in the mitochondrion matrix. It catalyses the reaction N(2)-acetyl-L-ornithine + L-glutamate = N-acetyl-L-glutamate + L-ornithine. It carries out the reaction L-glutamate + acetyl-CoA = N-acetyl-L-glutamate + CoA + H(+). It functions in the pathway amino-acid biosynthesis; L-arginine biosynthesis; L-ornithine and N-acetyl-L-glutamate from L-glutamate and N(2)-acetyl-L-ornithine (cyclic): step 1/1. The protein operates within amino-acid biosynthesis; L-arginine biosynthesis; N(2)-acetyl-L-ornithine from L-glutamate: step 1/4. In terms of biological role, catalyzes two activities which are involved in the cyclic version of arginine biosynthesis: the synthesis of acetylglutamate from glutamate and acetyl-CoA, and of ornithine by transacetylation between acetylornithine and glutamate. This is Arginine biosynthesis bifunctional protein ArgJ, mitochondrial from Paracoccidioides brasiliensis (strain Pb18).